Reading from the N-terminus, the 406-residue chain is Lysine-specific demethylase 8 (406 aa).

A compositionally biased stretch (basic and acidic residues) spans 143–152 (KAERSEEPFS). Residues 143 to 162 (KAERSEEPFSKKRKHDCKSE) are disordered. Residues 270–406 (DQVPELKEDI…LSFSVSFWWS (137 aa)) enclose the JmjC domain. The Fe cation site is built by H311 and D313.

Fe(2+) is required as a cofactor.

Its subcellular location is the nucleus. It catalyses the reaction N(6),N(6)-dimethyl-L-lysyl(36)-[histone H3] + 2 2-oxoglutarate + 2 O2 = L-lysyl(36)-[histone H3] + 2 formaldehyde + 2 succinate + 2 CO2. Functionally, histone demethylase required for G2/M phase cell cycle progression. Specifically demethylates dimethylated 'Lys-36' (H3K36me2) of histone H3, an epigenetic repressive mark, thereby acting as a transcription activator. May play a role in the regulation of the circadian clock. In Danio rerio (Zebrafish), this protein is Lysine-specific demethylase 8 (kdm8).